Here is a 292-residue protein sequence, read N- to C-terminus: Phosphatidylserine decarboxylase proenzyme (292 aa).

Residues aspartate 98, histidine 153, and serine 254 each act as charge relay system; for autoendoproteolytic cleavage activity in the active site. The active-site Schiff-base intermediate with substrate; via pyruvic acid; for decarboxylase activity is the serine 254. Serine 254 is subject to Pyruvic acid (Ser); by autocatalysis.

The protein belongs to the phosphatidylserine decarboxylase family. PSD-B subfamily. Prokaryotic type I sub-subfamily. As to quaternary structure, heterodimer of a large membrane-associated beta subunit and a small pyruvoyl-containing alpha subunit. It depends on pyruvate as a cofactor. In terms of processing, is synthesized initially as an inactive proenzyme. Formation of the active enzyme involves a self-maturation process in which the active site pyruvoyl group is generated from an internal serine residue via an autocatalytic post-translational modification. Two non-identical subunits are generated from the proenzyme in this reaction, and the pyruvate is formed at the N-terminus of the alpha chain, which is derived from the carboxyl end of the proenzyme. The autoendoproteolytic cleavage occurs by a canonical serine protease mechanism, in which the side chain hydroxyl group of the serine supplies its oxygen atom to form the C-terminus of the beta chain, while the remainder of the serine residue undergoes an oxidative deamination to produce ammonia and the pyruvoyl prosthetic group on the alpha chain. During this reaction, the Ser that is part of the protease active site of the proenzyme becomes the pyruvoyl prosthetic group, which constitutes an essential element of the active site of the mature decarboxylase.

Its subcellular location is the cell membrane. The enzyme catalyses a 1,2-diacyl-sn-glycero-3-phospho-L-serine + H(+) = a 1,2-diacyl-sn-glycero-3-phosphoethanolamine + CO2. Its pathway is phospholipid metabolism; phosphatidylethanolamine biosynthesis; phosphatidylethanolamine from CDP-diacylglycerol: step 2/2. Its function is as follows. Catalyzes the formation of phosphatidylethanolamine (PtdEtn) from phosphatidylserine (PtdSer). This Halorhodospira halophila (strain DSM 244 / SL1) (Ectothiorhodospira halophila (strain DSM 244 / SL1)) protein is Phosphatidylserine decarboxylase proenzyme.